We begin with the raw amino-acid sequence, 429 residues long: GTPase Obg (429 aa).

The 158-residue stretch at 1 to 158 (MFVDQVKIYV…RNVQLELKVL (158 aa)) folds into the Obg domain. The disordered stretch occupies residues 124-145 (RGNKRFATPANPAPELSENGEP). One can recognise an OBG-type G domain in the interval 159–329 (ADVGLVGFPS…LLLAIADKLE (171 aa)). GTP-binding positions include 165 to 172 (GFPSVGKS), 190 to 194 (FTTIV), 212 to 215 (DLPG), 282 to 285 (NKMD), and 310 to 312 (SAV). Ser172 and Thr192 together coordinate Mg(2+). One can recognise an OCT domain in the interval 351–429 (KYVAEEPDFE…LLDYEFEFMD (79 aa)).

Belongs to the TRAFAC class OBG-HflX-like GTPase superfamily. OBG GTPase family. As to quaternary structure, monomer. It depends on Mg(2+) as a cofactor.

It localises to the cytoplasm. An essential GTPase which binds GTP, GDP and possibly (p)ppGpp with moderate affinity, with high nucleotide exchange rates and a fairly low GTP hydrolysis rate. Plays a role in control of the cell cycle, stress response, ribosome biogenesis and in those bacteria that undergo differentiation, in morphogenesis control. The polypeptide is GTPase Obg (Listeria innocua serovar 6a (strain ATCC BAA-680 / CLIP 11262)).